A 264-amino-acid chain; its full sequence is MKQYLDLLQHVMENGSDRGDRTGTGTRSVFGYQMRFDLAQGFPVLTTKKLHLRSIIHELLWFLKGDTNIAYLKENGVSIWDEWADENGDLGPVYGAQWRSWPKPGGGHIDQIANLVESIKTNPNSRRHIVSAWNPAEVDEMALPPCHCLFQFYVADGKLSCQLYQRSADIFLGVPFNIASYALLTMMVAQVTGLKAGDFIHTLGDAHLYANHFEQARLQLTRQPKPLPVMRINPDVKDVFGFAFEDFSLENYSADPVIKAPIAV.

Arg-21 provides a ligand contact to dUMP. His-51 lines the (6R)-5,10-methylene-5,6,7,8-tetrahydrofolate pocket. DUMP is bound at residue 126–127; that stretch reads RR. The active-site Nucleophile is Cys-146. Residues 166–169, Asn-177, and 207–209 contribute to the dUMP site; these read RSAD and HLY. Asp-169 provides a ligand contact to (6R)-5,10-methylene-5,6,7,8-tetrahydrofolate. A (6R)-5,10-methylene-5,6,7,8-tetrahydrofolate-binding site is contributed by Ala-263.

Belongs to the thymidylate synthase family. Bacterial-type ThyA subfamily. In terms of assembly, homodimer.

Its subcellular location is the cytoplasm. The catalysed reaction is dUMP + (6R)-5,10-methylene-5,6,7,8-tetrahydrofolate = 7,8-dihydrofolate + dTMP. It participates in pyrimidine metabolism; dTTP biosynthesis. Functionally, catalyzes the reductive methylation of 2'-deoxyuridine-5'-monophosphate (dUMP) to 2'-deoxythymidine-5'-monophosphate (dTMP) while utilizing 5,10-methylenetetrahydrofolate (mTHF) as the methyl donor and reductant in the reaction, yielding dihydrofolate (DHF) as a by-product. This enzymatic reaction provides an intracellular de novo source of dTMP, an essential precursor for DNA biosynthesis. The protein is Thymidylate synthase of Allorhizobium ampelinum (strain ATCC BAA-846 / DSM 112012 / S4) (Agrobacterium vitis (strain S4)).